Consider the following 93-residue polypeptide: Small ribosomal subunit protein uS19 (93 aa).

This sequence belongs to the universal ribosomal protein uS19 family.

Protein S19 forms a complex with S13 that binds strongly to the 16S ribosomal RNA. The chain is Small ribosomal subunit protein uS19 from Mycolicibacterium smegmatis (strain ATCC 700084 / mc(2)155) (Mycobacterium smegmatis).